Reading from the N-terminus, the 487-residue chain is 7-deoxyloganetin glucosyltransferase (487 aa).

Residue H25 is the Proton acceptor of the active site. H25 is a binding site for an anthocyanidin. The Charge relay role is filled by D129. Residues T151, Q366, H381, W384, N385, S386, and E389 each contribute to the UDP-alpha-D-glucose site. Residue A404 coordinates an anthocyanidin. UDP-alpha-D-glucose is bound by residues E405 and Q406.

Belongs to the UDP-glycosyltransferase family. In terms of tissue distribution, expressed in roots.

The catalysed reaction is 7-deoxyloganetin + UDP-alpha-D-glucose = 7-deoxyloganin + UDP + H(+). Its function is as follows. Iridoid glucosyltransferase acting exclusively on 7-deoxyloganetin. No activity with 7-deoxyloganetic acid. This is 7-deoxyloganetin glucosyltransferase (UGT85A23) from Catharanthus roseus (Madagascar periwinkle).